Here is a 219-residue protein sequence, read N- to C-terminus: Transmembrane emp24 domain-containing protein 10 (219 aa).

The N-terminal stretch at Met1 to Ala31 is a signal peptide. The tract at residues Met1–Glu142 is required for interaction with STX17. Residues Ile32–Arg185 are Lumenal-facing. In terms of domain architecture, GOLD spans Arg41 to Ser193. Residues Leu147–Thr178 are required for TMED10 and TMED2 cis-Golgi network localization. Arg171 and Arg176 each carry dimethylated arginine. Asn179 carries N-linked (GlcNAc...) asparagine glycosylation. A helical transmembrane segment spans residues Val186–Phe206. The interval Gln204–Glu219 is interaction with COPG1. Residues Tyr207 to Glu219 lie on the Cytoplasmic side of the membrane. Residues Tyr207–Glu219 form an interaction with ARF1 and IL1B region. Residues Phe211–Phe212 carry the COPII vesicle coat-binding motif. The short motif at Phe211–Glu219 is the COPI vesicle coat-binding element.

Belongs to the EMP24/GP25L family. Predominantly dimeric and to a lesser extent monomeric in the ER. Monomer and dimer in ERGIC and cis-Golgi network. Forms homooligomer (via GOLD domain); the assembly is promoted by direct binding with leaderless cargos and may form a protein channel that facilitates cargo entry into the ERGIC. Forms heterooligomeric complexes with other members of the p24 family such as TMED2, TMED7 and TMED9. Interacts (via GOLD domain) with TMED2 (via GOLD domain); the complex is required for export of TMED10 from the ER to the cis-Golgi network; the complex is proposed to be involved in cis-Golgi network dynamics and / or biogenesis. Associates with the COPI vesicle coat subunits (coatomer). Tetramerization of the cytoplasmic domain at the Golgi membrane in vitro; the complex is proposed to interact with COPI coatomer and induce budding of the vesicles. Interacts with COPG1; the interaction involves TMED10 homodimer. Interacts with ARF1 (GDP-bound); the interaction probably involves a TMED10 oligomer. Interacts with SEC23A, SEC24B, SEC24C and SEC24D components of the coat protein complex II/COPII, indicative of an association of TMED10 with the COPII vesicle coat. Interacts with CD59. Interacts with MPPE1/PGAP5; the complex might recruit and sort GPI-anchored proteins to the ER-exit site, or the interaction might lead to recycling of PGAP5 between the ER and the Golgi. Interacts with F2LR1/PAR2. Interacts with KDELR2/ERD2; the interaction is disrupted by KDELR2 ligand. Found in a complex composed at least of SURF4, TMED2 and TMED10. Associates with the presenilin-dependent gamma-secretase complex. Interacts with STX17; the interaction is direct. Interacts with IL-1; the interaction is direct. Interacts with RAB21 (active GTP-bound form); the interaction is indirect and regulates TMED10 abundance and localization at the Golgi.

The protein resides in the endoplasmic reticulum membrane. The protein localises to the endoplasmic reticulum-Golgi intermediate compartment membrane. It localises to the golgi apparatus membrane. It is found in the golgi apparatus. Its subcellular location is the cis-Golgi network membrane. The protein resides in the trans-Golgi network membrane. The protein localises to the cytoplasmic vesicle. It localises to the secretory vesicle membrane. It is found in the cell membrane. Its subcellular location is the melanosome. Functionally, cargo receptor involved in protein vesicular trafficking and quality control in the endoplasmic reticulum (ER) and Golgi. The p24 protein family is a group of transmembrane proteins that bind coat protein complex I/COPI and coat protein complex II/COPII involved in vesicular trafficking between the membranes. Acts at the lumenal side for incorporation of secretory cargo molecules into transport vesicles and involved in vesicle coat formation at the cytoplasmic side. Mainly functions in the early secretory pathway and cycles between the ER, ER-Golgi intermediate compartment (ERGIC) and Golgi, mediating cargo transport through COPI and COPII-coated vesicles. In COPII vesicle-mediated anterograde transport, involved in the transport of GPI-anchored proteins by acting together with TMED2 as their cargo receptor; the function specifically implies SEC24C and SEC24D of the COPII vesicle coat and lipid raft-like microdomains of the ER. Recognizes GPI anchors structural remodeled in the ER by the GPI inositol-deacylase/PGAP1 and the metallophosphoesterase MPPE1/PGAP5. In COPI vesicle-mediated retrograde transport, involved in the biogenesis of COPI vesicles and vesicle coat recruitment. Involved in trafficking of amyloid beta A4 protein and soluble APP-beta release (independent from the modulation of gamma-secretase activity). Involved in the KDELR2-mediated retrograde transport of the toxin A subunit (CTX-A-K63)together with COPI and the COOH terminus of KDELR2. On Golgi membranes, acts as a primary receptor for ARF1-GDP, a GTP-binding protein involved in COPI-vesicle formation. Increases coatomer-dependent GTPase-activating activity of ARFGAP2 which mediates the hydrolysis of ARF1-bound GTP and therefore modulates protein trafficking from the Golgi apparatus. Involved in the exocytic trafficking of G protein-coupled receptors F2LR1/PAR2 (trypsin and tryspin-like enzyme receptor), OPRM1 (opioid receptor) and P2RY4 (UTD and UDP receptor) from the Golgi to the plasma membrane, thus contributing to receptor resensitization. In addition to its cargo receptor activity, may also act as a protein channel after oligomerization, facilitating the post-translational entry of leaderless cytoplasmic cargo into the ERGIC. Involved in the translocation into ERGIC, the vesicle entry and the secretion of leaderless cargos (lacking the secretion signal sequence), including the mature form of interleukin 1/IL-1 family members, the alpha-crystallin B chain HSPB5, the carbohydrate-binding proteins galectin-1/LGALS1 and galectin-3/LGALS3, the microtubule-associated protein Tau/MAPT, and the annexin A1/ANXA1; the translocation process is dependent on cargo protein unfolding and enhanced by chaperones HSP90AB1 and HSP90B1/GRP9. Could also associates with the presenilin-dependent gamma-secretase complex in order to regulate gamma-cleavages of the amyloid beta A4 protein to yield amyloid-beta 40/Abeta40. The protein is Transmembrane emp24 domain-containing protein 10 (TMED10) of Oryctolagus cuniculus (Rabbit).